A 356-amino-acid polypeptide reads, in one-letter code: NADH-quinone oxidoreductase subunit H (356 aa).

9 consecutive transmembrane segments (helical) span residues 16 to 36 (IAVLQILAFAVVLLISLAFLL), 52 to 72 (PNVVGAFGLLQSFADFFKFVF), 85 to 105 (LYLLAPLITLILAFVTWAVVP), 117 to 137 (VGILYLFAMSSLGVYGIIIGG), 163 to 183 (IGFIIVTVLLFAGSMNLSEII), 201 to 221 (WPMPMFLVMIPMAVIFFISAL), 254 to 274 (FMVGEYLNIVLMCAMTAILFF), 295 to 315 (AWYFFWFAAKIVFFFFMFAMV), and 334 to 354 (IFLPISLAAVALVGAAVVYGP).

Belongs to the complex I subunit 1 family. As to quaternary structure, NDH-1 is composed of 14 different subunits. Subunits NuoA, H, J, K, L, M, N constitute the membrane sector of the complex.

It localises to the cell inner membrane. The enzyme catalyses a quinone + NADH + 5 H(+)(in) = a quinol + NAD(+) + 4 H(+)(out). NDH-1 shuttles electrons from NADH, via FMN and iron-sulfur (Fe-S) centers, to quinones in the respiratory chain. The immediate electron acceptor for the enzyme in this species is believed to be ubiquinone. Couples the redox reaction to proton translocation (for every two electrons transferred, four hydrogen ions are translocated across the cytoplasmic membrane), and thus conserves the redox energy in a proton gradient. This subunit may bind ubiquinone. The sequence is that of NADH-quinone oxidoreductase subunit H from Maricaulis maris (strain MCS10) (Caulobacter maris).